A 402-amino-acid chain; its full sequence is Dynactin subunit 2 (402 aa).

The disordered stretch occupies residues 1–24; it reads MADPKYADLPGIARNEPDVYETSD. Residue A2 is modified to N-acetylalanine. Phosphotyrosine is present on Y6. S83 bears the Phosphoserine mark. Y86 is subject to Phosphotyrosine. A coiled-coil region spans residues 100-130; that stretch reads QQKYQRLLHEVQELTTEVEKIKTTVKESATE. Phosphothreonine occurs at positions 134 and 199. Residues 185 to 205 are disordered; the sequence is KSSKGSSGGKSTGGTPPDSSL. Residues 215-247 are a coiled coil; it reads EQDKFSQAAKVAELEKRLTELEATVRCDQDAQN. S321 carries the post-translational modification Phosphoserine.

It belongs to the dynactin subunit 2 family. As to quaternary structure, subunit of dynactin, a multiprotein complex part of a tripartite complex with dynein and a adapter, such as BICDL1, BICD2 or HOOK3. The dynactin complex is built around ACTR1A/ACTB filament and consists of an actin-related filament composed of a shoulder domain, a pointed end and a barbed end. Its length is defined by its flexible shoulder domain. The soulder is composed of 2 DCTN1 subunits, 4 DCTN2 and 2 DCTN3. The 4 DCNT2 (via N-terminus) bind the ACTR1A filament and act as molecular rulers to determine the length. The pointed end is important for binding dynein-dynactin cargo adapters and consists of 4 subunits: ACTR10, DCNT4, DCTN5 and DCTN6. The barbed end is composed of a CAPZA1:CAPZB heterodimers, which binds ACTR1A/ACTB filament and dynactin and stabilizes dynactin. Interacts with BICD2 and CEP135. Interacts with DYNAP. Interacts with ECPAS. Interacts with MAPRE1.

The protein localises to the cytoplasm. It is found in the cytoskeleton. The protein resides in the microtubule organizing center. Its subcellular location is the centrosome. It localises to the membrane. Its function is as follows. Part of the dynactin complex that activates the molecular motor dynein for ultra-processive transport along microtubules. In the dynactin soulder domain, binds the ACTR1A filament and acts as a molecular ruler to determine the length. Modulates cytoplasmic dynein binding to an organelle, and plays a role in prometaphase chromosome alignment and spindle organization during mitosis. Involved in anchoring microtubules to centrosomes. May play a role in synapse formation during brain development. In Rattus norvegicus (Rat), this protein is Dynactin subunit 2 (Dctn2).